Reading from the N-terminus, the 1079-residue chain is DNA annealing helicase and endonuclease ZRANB3 (1079 aa).

The Helicase ATP-binding domain occupies 46–208 (IFALKRNGRC…FMQIEALFPQ (163 aa)). The DNA annealing helicase activity stretch occupies residues 46-481 (IFALKRNGRC…GRKEKIQAEE (436 aa)). 59–66 (DEMGLGKT) provides a ligand contact to ATP. The DEAH box signature appears at 157 to 160 (DESH). The 157-residue stretch at 325–481 (AVKDYIKMML…GRKEKIQAEE (157 aa)) folds into the Helicase C-terminal domain. The short motif at 519–526 (QHDIRSFF) is the PIP-box element. Serine 569 is subject to Phosphoserine. The segment at 582–601 (ASEDHCSPSEETPSQSKQIR) is disordered. Over residues 590-600 (SEETPSQSKQI) the composition is skewed to polar residues. Residues 621–650 (PVEGWQCSLCTYINNSELPYCEMCETPQGS) form a RanBP2-type zinc finger. A (Microbial infection) S-methylcysteine modification is found at cysteine 630. The interval 689–725 (LAQSEPGQLADSKEETPKIEKEDGLTSQPGNEQWKSS) is disordered. The segment covering 699 to 712 (DSKEETPKIEKEDG) has biased composition (basic and acidic residues). Polar residues predominate over residues 713 to 725 (LTSQPGNEQWKSS). In terms of domain architecture, HNH spans 1011-1051 (PGEGHFWQVDHIKPVYGGGGQCSLDNLQTLCTVCHKERTAR). Positions 1011–1079 (PGEGHFWQVD…SDITRFLVKK (69 aa)) are endonuclease activity. The short motif at 1074–1078 (RFLVK) is the APIM motif element.

This sequence belongs to the SNF2/RAD54 helicase family. In terms of assembly, interacts (via PIP-box and RanBP2-type zinc finger) with PCNA (when PCNA is polyubiquitinated via 'Lys-63'-linked polyubiquitin). Post-translationally, (Microbial infection) Methylation at Cys-630 by enteropathogenic E.coli protein NleE or S.flexneri protein OspZ: methylation disrupts ability to bind 'Lys-63'-linked ubiquitin.

Its subcellular location is the nucleus. It is found in the chromosome. DNA annealing helicase and endonuclease required to maintain genome stability at stalled or collapsed replication forks by facilitating fork restart and limiting inappropriate recombination that could occur during template switching events. Recruited to the sites of stalled DNA replication by polyubiquitinated PCNA and acts as a structure-specific endonuclease that cleaves the replication fork D-loop intermediate, generating an accessible 3'-OH group in the template of the leading strand, which is amenable to extension by DNA polymerase. In addition to endonuclease activity, also catalyzes the fork regression via annealing helicase activity in order to prevent disintegration of the replication fork and the formation of double-strand breaks. The polypeptide is DNA annealing helicase and endonuclease ZRANB3 (Homo sapiens (Human)).